The chain runs to 360 residues: MFLWLAHFSNWLTGLNIFQYTTFRAVMAALTALAFSLMFGPWTIRRLTALKCGQAVRTDGPQTHLVKNGTPTMGGSLILTAITVSTLLWGNWANPYIWILLGVLLATGALGFYDDWRKVVYKDPNGVSAKFKMVWQSSVAIIAGLALFYLAANSANNILIVPFFKQIALPLGVVGFLVLSYLTIVGTSNAVNLTDGLDGLATFPVVLVAAGLAIFAYVSGHYQFSQYLQLPYVAGANEVAIFCTAMCGACLGFLWFNAYPAQVFMGDVGALALGAALGTVAVIVRQEFVLVIMGGLFVVEAVSVMLQVGWYKKTKKRIFLMAPIHHHYEQKGWKETQVVVRFWIITIVLVLIGLSTLKIR.

Transmembrane regions (helical) follow at residues 24–44 (RAVMAALTALAFSLMFGPWTI), 69–89 (GTPTMGGSLILTAITVSTLLW), 92–112 (WANPYIWILLGVLLATGALGF), 133–153 (MVWQSSVAIIAGLALFYLAAN), 158–178 (ILIVPFFKQIALPLGVVGFLV), 199–219 (GLATFPVVLVAAGLAIFAYVS), 239–259 (VAIFCTAMCGACLGFLWFNAY), 263–283 (VFMGDVGALALGAALGTVAVI), 288–308 (FVLVIMGGLFVVEAVSVMLQV), and 337–357 (QVVVRFWIITIVLVLIGLSTL).

Belongs to the glycosyltransferase 4 family. MraY subfamily. Mg(2+) serves as cofactor.

The protein resides in the cell inner membrane. It carries out the reaction UDP-N-acetyl-alpha-D-muramoyl-L-alanyl-gamma-D-glutamyl-meso-2,6-diaminopimeloyl-D-alanyl-D-alanine + di-trans,octa-cis-undecaprenyl phosphate = di-trans,octa-cis-undecaprenyl diphospho-N-acetyl-alpha-D-muramoyl-L-alanyl-D-glutamyl-meso-2,6-diaminopimeloyl-D-alanyl-D-alanine + UMP. It participates in cell wall biogenesis; peptidoglycan biosynthesis. Its function is as follows. Catalyzes the initial step of the lipid cycle reactions in the biosynthesis of the cell wall peptidoglycan: transfers peptidoglycan precursor phospho-MurNAc-pentapeptide from UDP-MurNAc-pentapeptide onto the lipid carrier undecaprenyl phosphate, yielding undecaprenyl-pyrophosphoryl-MurNAc-pentapeptide, known as lipid I. This is Phospho-N-acetylmuramoyl-pentapeptide-transferase from Neisseria meningitidis serogroup C (strain 053442).